The primary structure comprises 96 residues: Co-chaperonin GroES (96 aa).

This sequence belongs to the GroES chaperonin family. Heptamer of 7 subunits arranged in a ring. Interacts with the chaperonin GroEL.

The protein resides in the cytoplasm. In terms of biological role, together with the chaperonin GroEL, plays an essential role in assisting protein folding. The GroEL-GroES system forms a nano-cage that allows encapsulation of the non-native substrate proteins and provides a physical environment optimized to promote and accelerate protein folding. GroES binds to the apical surface of the GroEL ring, thereby capping the opening of the GroEL channel. The chain is Co-chaperonin GroES from Albidiferax ferrireducens (strain ATCC BAA-621 / DSM 15236 / T118) (Rhodoferax ferrireducens).